The primary structure comprises 94 residues: Co-chaperonin GroES (94 aa).

This sequence belongs to the GroES chaperonin family. In terms of assembly, heptamer of 7 subunits arranged in a ring. Interacts with the chaperonin GroEL.

Its subcellular location is the cytoplasm. Together with the chaperonin GroEL, plays an essential role in assisting protein folding. The GroEL-GroES system forms a nano-cage that allows encapsulation of the non-native substrate proteins and provides a physical environment optimized to promote and accelerate protein folding. GroES binds to the apical surface of the GroEL ring, thereby capping the opening of the GroEL channel. The sequence is that of Co-chaperonin GroES from Streptococcus pneumoniae (strain ATCC BAA-255 / R6).